The chain runs to 272 residues: Phosphoglycolate phosphatase (272 aa).

Aspartate 19 (nucleophile) is an active-site residue. Positions 19, 21, and 182 each coordinate Mg(2+).

Belongs to the HAD-like hydrolase superfamily. CbbY/CbbZ/Gph/YieH family. The cofactor is Mg(2+).

The enzyme catalyses 2-phosphoglycolate + H2O = glycolate + phosphate. The protein operates within organic acid metabolism; glycolate biosynthesis; glycolate from 2-phosphoglycolate: step 1/1. Functionally, specifically catalyzes the dephosphorylation of 2-phosphoglycolate. Is involved in the dissimilation of the intracellular 2-phosphoglycolate formed during the DNA repair of 3'-phosphoglycolate ends, a major class of DNA lesions induced by oxidative stress. This is Phosphoglycolate phosphatase from Pseudomonas syringae pv. syringae (strain B728a).